Reading from the N-terminus, the 261-residue chain is Hydroxyethylthiazole kinase (261 aa).

A substrate-binding site is contributed by methionine 38. 2 residues coordinate ATP: arginine 114 and threonine 159. Glycine 186 serves as a coordination point for substrate.

It belongs to the Thz kinase family. It depends on Mg(2+) as a cofactor.

It carries out the reaction 5-(2-hydroxyethyl)-4-methylthiazole + ATP = 4-methyl-5-(2-phosphooxyethyl)-thiazole + ADP + H(+). Its pathway is cofactor biosynthesis; thiamine diphosphate biosynthesis; 4-methyl-5-(2-phosphoethyl)-thiazole from 5-(2-hydroxyethyl)-4-methylthiazole: step 1/1. In terms of biological role, catalyzes the phosphorylation of the hydroxyl group of 4-methyl-5-beta-hydroxyethylthiazole (THZ). In Halalkalibacterium halodurans (strain ATCC BAA-125 / DSM 18197 / FERM 7344 / JCM 9153 / C-125) (Bacillus halodurans), this protein is Hydroxyethylthiazole kinase.